The sequence spans 475 residues: Aspartyl/glutamyl-tRNA(Asn/Gln) amidotransferase subunit B (475 aa).

Belongs to the GatB/GatE family. GatB subfamily. As to quaternary structure, heterotrimer of A, B and C subunits.

The enzyme catalyses L-glutamyl-tRNA(Gln) + L-glutamine + ATP + H2O = L-glutaminyl-tRNA(Gln) + L-glutamate + ADP + phosphate + H(+). It carries out the reaction L-aspartyl-tRNA(Asn) + L-glutamine + ATP + H2O = L-asparaginyl-tRNA(Asn) + L-glutamate + ADP + phosphate + 2 H(+). In terms of biological role, allows the formation of correctly charged Asn-tRNA(Asn) or Gln-tRNA(Gln) through the transamidation of misacylated Asp-tRNA(Asn) or Glu-tRNA(Gln) in organisms which lack either or both of asparaginyl-tRNA or glutaminyl-tRNA synthetases. The reaction takes place in the presence of glutamine and ATP through an activated phospho-Asp-tRNA(Asn) or phospho-Glu-tRNA(Gln). This chain is Aspartyl/glutamyl-tRNA(Asn/Gln) amidotransferase subunit B, found in Chlorobium phaeobacteroides (strain DSM 266 / SMG 266 / 2430).